A 78-amino-acid polypeptide reads, in one-letter code: MVPNLMTDIEKLQVQVDELEMKQAFQEQTIDDLNEALTDQQFQFDKMQVQLKFLVGKVKGFQSSNMAEESEETPPPHY.

This sequence belongs to the SlyX family.

The sequence is that of Protein SlyX homolog from Photobacterium profundum (strain SS9).